We begin with the raw amino-acid sequence, 606 residues long: MVEGPGCTLNGEKIRARVRPGQAVTDVRGRALQGLGGPGSPPAAPGPMGTSQAAALNNNKNSSQDFLRLFNGHGYSGVETLGKELFMYFGPKALRIHFGMKGSLVINPLESKNKNGVSPVFEVQLTKDLICFFDSSVEIRNSTESQQRIRVMEELDVCSPRFSFSRAESEVKKQKGRMLCDVLMDQKVLPGVGNIIKNEALFDSGFHPSVKVCQLTDEQIHHLVKMIRNFSILFYRCCKVGSALSKHYKVYKRPNCGQCCCKITVCRLGENNRMTYFCPHCQKENPQHVDIRMLPVRNTTVNWPSSRERHLMDCVAQKSEEQWTCEVCTLINKLSSKTCDACLTSRPADSVLRNEGNPIVFNNLMKYPCNSFGKSKAKVKINRKTAFGTTTLVLTDFSNKHSALEREESHSHIPDGEFPSPPPNVCGSDTLNTSKERTNCRSQPSDKVNISPVVCSQYKLFSPAHKKLKTTHYSSPDLKSCNPGFSNSELQSSMTDGPCLLNAGSPRCSKHGRPCALRVVRKSGENKGRHFYACPLAREAQCGFFEWADLSFPFCNHGKRSIMRTVLKIGPNNGKNFFVCPLGKEKQCNFFQWAQNGPGINIIPGC.

V2 (schiff-base intermediate with DNA; via amino nitrogen) is an active-site residue. The segment at 31–51 is disordered; sequence ALQGLGGPGSPPAAPGPMGTS. DNA-binding residues include N194 and R273. The FPG-type zinc-finger motif lies at 249 to 283; it reads KVYKRPNCGQCCCKITVCRLGENNRMTYFCPHCQK. Residues 319–348 form a RanBP2-type zinc finger; that stretch reads SEEQWTCEVCTLINKLSSKTCDACLTSRPA. S451 carries the post-translational modification Phosphoserine. 8 residues coordinate Zn(2+): C508, H511, C534, C542, C555, H557, C580, and C588. 2 consecutive GRF-type zinc fingers follow at residues 508 to 551 and 555 to 597; these read CSKH…ADLS and CNHG…AQNG.

It belongs to the FPG family.

It localises to the nucleus. It is found in the chromosome. It catalyses the reaction 2'-deoxyribonucleotide-(2'-deoxyribose 5'-phosphate)-2'-deoxyribonucleotide-DNA = a 3'-end 2'-deoxyribonucleotide-(2,3-dehydro-2,3-deoxyribose 5'-phosphate)-DNA + a 5'-end 5'-phospho-2'-deoxyribonucleoside-DNA + H(+). DNA glycosylase which prefers single-stranded DNA (ssDNA), or partially ssDNA structures such as bubble and fork structures, to double-stranded DNA (dsDNA). Mediates interstrand cross-link repair in response to replication stress: acts by mediating DNA glycosylase activity, cleaving one of the two N-glycosyl bonds comprising the interstrand cross-link, which avoids the formation of a double-strand break but generates an abasic site that is bypassed by translesion synthesis polymerases. In vitro, displays strong glycosylase activity towards the hydantoin lesions spiroiminodihydantoin (Sp) and guanidinohydantoin (Gh) in both ssDNA and dsDNA; also recognizes FapyA, FapyG, 5-OHU, 5-OHC, 5-OHMH, Tg and 8-oxoA lesions in ssDNA. No activity on 8-oxoG detected. Also shows weak DNA-(apurinic or apyrimidinic site) lyase activity. In vivo, appears to be the primary enzyme involved in removing Sp and Gh from ssDNA in neonatal tissues. The polypeptide is Endonuclease 8-like 3 (NEIL3) (Bos taurus (Bovine)).